A 641-amino-acid polypeptide reads, in one-letter code: Tetracycline resistance protein TetS (641 aa).

The tr-type G domain maps to 1 to 242 (MKIINIGILA…VITSKLFSPT (242 aa)). GTP contacts are provided by residues 10 to 17 (AHVDAGKT), 74 to 78 (DTPGH), and 128 to 131 (NKID).

Belongs to the TRAFAC class translation factor GTPase superfamily. Classic translation factor GTPase family. TetM/TetO subfamily.

Its function is as follows. Abolishes the inhibitory effect of tetracyclin on protein synthesis by a non-covalent modification of the ribosomes. The chain is Tetracycline resistance protein TetS (tetS) from Listeria monocytogenes.